The sequence spans 444 residues: Argininosuccinate synthase (444 aa).

Residues 18–26 (AFSGGLDTS) and Ala-44 each bind ATP. Tyr-100 contributes to the L-citrulline binding site. The ATP site is built by Gly-130 and Thr-132. Positions 132, 136, and 137 each coordinate L-aspartate. Asn-136 serves as a coordination point for L-citrulline. Asp-137 provides a ligand contact to ATP. L-citrulline-binding residues include Arg-140 and Ser-193. Asp-195 serves as a coordination point for ATP. Positions 202, 204, and 281 each coordinate L-citrulline.

This sequence belongs to the argininosuccinate synthase family. Type 2 subfamily. Homotetramer.

Its subcellular location is the cytoplasm. It carries out the reaction L-citrulline + L-aspartate + ATP = 2-(N(omega)-L-arginino)succinate + AMP + diphosphate + H(+). It participates in amino-acid biosynthesis; L-arginine biosynthesis; L-arginine from L-ornithine and carbamoyl phosphate: step 2/3. The chain is Argininosuccinate synthase from Actinobacillus succinogenes (strain ATCC 55618 / DSM 22257 / CCUG 43843 / 130Z).